A 293-amino-acid chain; its full sequence is Extracellular metalloprotease MGYG_00389 (293 aa).

An N-terminal signal peptide occupies residues 1 to 19 (MRFSVFLPAIAALSSAVAA). Asn-49 and Asn-53 each carry an N-linked (GlcNAc...) asparagine glycan. His-184 serves as a coordination point for Zn(2+). Glu-185 is an active-site residue. His-188 is a Zn(2+) binding site. The cysteines at positions 223 and 249 are disulfide-linked. The disordered stretch occupies residues 270 to 293 (GSGSGSVTRPRPKPPVLMDYEHRL).

Belongs to the peptidase M43B family.

Its subcellular location is the secreted. Its function is as follows. Secreted metalloproteinase that allows assimilation of proteinaceous substrates. Plays a pivotal role as a pathogenicity determinant during infections and contributes to the ability of the pathogen to persist within the mammalian host. The chain is Extracellular metalloprotease MGYG_00389 from Arthroderma gypseum (strain ATCC MYA-4604 / CBS 118893) (Microsporum gypseum).